The chain runs to 267 residues: UPF0162 protein HI_1558 (267 aa).

This sequence belongs to the UPF0162 family.

The polypeptide is UPF0162 protein HI_1558 (Haemophilus influenzae (strain ATCC 51907 / DSM 11121 / KW20 / Rd)).